A 197-amino-acid polypeptide reads, in one-letter code: Dephospho-CoA kinase (197 aa).

The region spanning 3–197 is the DPCK domain; sequence VYGLTGGIGS…QSLLHTHQNT (195 aa). Residue 11-16 participates in ATP binding; sequence GSGKTT.

Belongs to the CoaE family.

The protein resides in the cytoplasm. It carries out the reaction 3'-dephospho-CoA + ATP = ADP + CoA + H(+). It functions in the pathway cofactor biosynthesis; coenzyme A biosynthesis; CoA from (R)-pantothenate: step 5/5. Catalyzes the phosphorylation of the 3'-hydroxyl group of dephosphocoenzyme A to form coenzyme A. In Hydrogenovibrio crunogenus (strain DSM 25203 / XCL-2) (Thiomicrospira crunogena), this protein is Dephospho-CoA kinase.